The following is a 192-amino-acid chain: Probable nicotinate-nucleotide adenylyltransferase (192 aa).

It belongs to the NadD family.

It catalyses the reaction nicotinate beta-D-ribonucleotide + ATP + H(+) = deamido-NAD(+) + diphosphate. It participates in cofactor biosynthesis; NAD(+) biosynthesis; deamido-NAD(+) from nicotinate D-ribonucleotide: step 1/1. Catalyzes the reversible adenylation of nicotinate mononucleotide (NaMN) to nicotinic acid adenine dinucleotide (NaAD). The polypeptide is Probable nicotinate-nucleotide adenylyltransferase (Cereibacter sphaeroides (strain ATCC 17029 / ATH 2.4.9) (Rhodobacter sphaeroides)).